The sequence spans 122 residues: NLLQFNKMIKEETGKNAIPFYAFYGCYCGGGGQGKPKDGTDRCCFVHDCCYGRLVNCNTKSDIYSYSLKEGYITCGKGTNCEEQICECDRVAAECFRRNLDTYNNGYMFYRDSKCTETSEEC.

7 cysteine pairs are disulfide-bonded: C26-C115, C28-C44, C43-C95, C49-C122, C50-C88, C57-C81, and C75-C86. Y27, G29, and G31 together coordinate Ca(2+). The active site involves H47. Ca(2+) is bound at residue D48. Residue D89 is part of the active site.

It depends on Ca(2+) as a cofactor. Expressed by the venom gland.

It is found in the secreted. It carries out the reaction a 1,2-diacyl-sn-glycero-3-phosphocholine + H2O = a 1-acyl-sn-glycero-3-phosphocholine + a fatty acid + H(+). In terms of biological role, snake venom phospholipase A2 (PLA2) that inhibits neuromuscular transmission by blocking acetylcholine release from the nerve termini. PLA2 catalyzes the calcium-dependent hydrolysis of the 2-acyl groups in 3-sn-phosphoglycerides. The protein is Neutral phospholipase A2 agkistrodotoxin of Gloydius halys (Chinese water mocassin).